Here is a 131-residue protein sequence, read N- to C-terminus: L-ectoine synthase (131 aa).

This sequence belongs to the ectoine synthase family.

It carries out the reaction (2S)-4-acetamido-2-aminobutanoate = L-ectoine + H2O. Its pathway is amine and polyamine biosynthesis; ectoine biosynthesis; L-ectoine from L-aspartate 4-semialdehyde: step 3/3. In terms of biological role, catalyzes the circularization of gamma-N-acetyl-alpha,gamma-diaminobutyric acid (ADABA) to ectoine (1,4,5,6-tetrahydro-2-methyl-4-pyrimidine carboxylic acid), which is an excellent osmoprotectant. This is L-ectoine synthase from Bordetella bronchiseptica (strain ATCC BAA-588 / NCTC 13252 / RB50) (Alcaligenes bronchisepticus).